A 334-amino-acid chain; its full sequence is Methionine adenosyltransferase 2 subunit beta (334 aa).

Residues 37–40, 60–62, 71–72, C93, R97, and Y159 contribute to the NADP(+) site; these read TGLL, YSR, and NL. Residues 319–334 form a required for interaction with MAT2A region; it reads LWPFLVDKRWRQTVFH.

It belongs to the dTDP-4-dehydrorhamnose reductase family. MAT2B subfamily. In terms of assembly, heterotrimer; composed of a catalytic mat2a homodimer that binds one regulatory mat2b chain. Heterohexamer; composed of a central, catalytic mat2a homotetramer flanked on either side by a regulatory mat2b chain. NADP binding increases the affinity for mat2a.

Its pathway is amino-acid biosynthesis; S-adenosyl-L-methionine biosynthesis; S-adenosyl-L-methionine from L-methionine: step 1/1. Regulatory subunit of S-adenosylmethionine synthetase 2, an enzyme that catalyzes the formation of S-adenosylmethionine from methionine and ATP. Regulates MAT2A catalytic activity by changing its kinetic properties, increasing its affinity for L-methionine. Can bind NADP (in vitro). The polypeptide is Methionine adenosyltransferase 2 subunit beta (mat2b) (Xenopus laevis (African clawed frog)).